Here is a 563-residue protein sequence, read N- to C-terminus: Quinidine resistance protein 1 (563 aa).

Positions 1-10 are enriched in polar residues; the sequence is MTKQQTSVMR. A disordered region spans residues 1-50; sequence MTKQQTSVMRNASIAKEEREGSDNNNVDRSSSDAISDNDAERSNSHSEID. Topologically, residues 1-75 are cytoplasmic; the sequence is MTKQQTSVMR…KQKMLLVVQC (75 aa). The span at 23 to 33 shows a compositional bias: low complexity; sequence DNNNVDRSSSD. Over residues 39-49 the composition is skewed to basic and acidic residues; that stretch reads DAERSNSHSEI. The helical transmembrane segment at 76–96 threads the bilayer; sequence AFTGFFSTVAGSIYYPVLTII. Topologically, residues 97–108 are extracellular; sequence ERKFNITEELAN. Residues 109–129 form a helical membrane-spanning segment; the sequence is VTIVVYFIFQGVAPSIMGGLA. Residues 130–135 are Cytoplasmic-facing; the sequence is DTFGRR. The chain crosses the membrane as a helical span at residues 136–156; that stretch reads PIVLWAILAYFCACIGLACAH. Residues 157–165 lie on the Extracellular side of the membrane; the sequence is NYAQILALR. A helical transmembrane segment spans residues 166 to 186; sequence CLQAAGISPVIAINSGIMGDV. Over 187–195 the chain is Cytoplasmic; that stretch reads TTKVERGGY. Residues 196–216 form a helical membrane-spanning segment; sequence VGLVAGFQVVGTAFGALIGAG. Residues 217–224 are Extracellular-facing; it reads LSSKWGWR. A helical membrane pass occupies residues 225 to 245; that stretch reads AIFWFLAIGSGICLVFSTLLM. Over 246-296 the chain is Cytoplasmic; it reads PETKRTLVGNGSVTPRSFLNRSLILHVGSVKKTLHLDDPDPETLEPRTSVD. Residues 297 to 317 form a helical membrane-spanning segment; sequence FLAPLKILHIREIDILLSIAG. Residues 318–341 are Extracellular-facing; the sequence is LQFSTWTTHQTALTIVLSKKYNLS. Residues 342–362 form a helical membrane-spanning segment; it reads VAKIGLCFLPAGISTLTSIIS. The Cytoplasmic segment spans residues 363–421; it reads AGRYLNWSYRTRKVKYNRWIKEQELQLMEKYKGDKNKVAELIHSNSHYAFNLVEARLHP. A helical membrane pass occupies residues 422 to 442; the sequence is AFVTLLLSSIGFTAFGWCISV. Residues 443-445 are Extracellular-facing; it reads KTP. The chain crosses the membrane as a helical span at residues 446 to 466; sequence LAAVLCTSAFASLFSNCILTF. Residues 467–481 are Cytoplasmic-facing; the sequence is STTLIVDLFPSKAST. The chain crosses the membrane as a helical span at residues 482-502; sequence ATGCLNLFRCLLSAIFIAALT. The Extracellular segment spans residues 503 to 511; it reads KMVEKMRYG. The chain crosses the membrane as a helical span at residues 512-532; that stretch reads GVFTFLSAITSSSSLLLFYLL. Residues 533-563 lie on the Cytoplasmic side of the membrane; the sequence is KNGKQLSFDRIRANDKSAGRSVGKNSEKVST.

This sequence belongs to the major facilitator superfamily. CAR1 family.

Its subcellular location is the cell membrane. Functionally, multidrug resistance transporter involved in resistance and adaptation to quinidine and ketoconazole. The sequence is that of Quinidine resistance protein 1 (QDR1) from Saccharomyces cerevisiae (strain ATCC 204508 / S288c) (Baker's yeast).